The primary structure comprises 170 residues: Peptide deformylase (170 aa).

The Fe cation site is built by C91 and H133. E134 is an active-site residue. H137 is a Fe cation binding site.

Belongs to the polypeptide deformylase family. Requires Fe(2+) as cofactor.

The enzyme catalyses N-terminal N-formyl-L-methionyl-[peptide] + H2O = N-terminal L-methionyl-[peptide] + formate. Functionally, removes the formyl group from the N-terminal Met of newly synthesized proteins. Requires at least a dipeptide for an efficient rate of reaction. N-terminal L-methionine is a prerequisite for activity but the enzyme has broad specificity at other positions. The chain is Peptide deformylase from Yersinia enterocolitica serotype O:8 / biotype 1B (strain NCTC 13174 / 8081).